An 87-amino-acid chain; its full sequence is Small ribosomal subunit protein uS19 (87 aa).

Belongs to the universal ribosomal protein uS19 family.

Its function is as follows. Protein S19 forms a complex with S13 that binds strongly to the 16S ribosomal RNA. This Mycoplasma pneumoniae (strain ATCC 29342 / M129 / Subtype 1) (Mycoplasmoides pneumoniae) protein is Small ribosomal subunit protein uS19 (rpsS).